A 257-amino-acid polypeptide reads, in one-letter code: UPF0246 protein Shal_1126 (257 aa).

This sequence belongs to the UPF0246 family.

The sequence is that of UPF0246 protein Shal_1126 from Shewanella halifaxensis (strain HAW-EB4).